Reading from the N-terminus, the 428-residue chain is UDP-N-acetylglucosamine 1-carboxyvinyltransferase (428 aa).

25–26 (KN) is a binding site for phosphoenolpyruvate. UDP-N-acetyl-alpha-D-glucosamine is bound at residue Arg102. Cys126 (proton donor) is an active-site residue. 2-(S-cysteinyl)pyruvic acid O-phosphothioketal is present on Cys126. UDP-N-acetyl-alpha-D-glucosamine-binding residues include Asp316 and Val338.

It belongs to the EPSP synthase family. MurA subfamily.

It is found in the cytoplasm. The enzyme catalyses phosphoenolpyruvate + UDP-N-acetyl-alpha-D-glucosamine = UDP-N-acetyl-3-O-(1-carboxyvinyl)-alpha-D-glucosamine + phosphate. It functions in the pathway cell wall biogenesis; peptidoglycan biosynthesis. Its function is as follows. Cell wall formation. Adds enolpyruvyl to UDP-N-acetylglucosamine. This chain is UDP-N-acetylglucosamine 1-carboxyvinyltransferase, found in Anaplasma marginale (strain St. Maries).